Reading from the N-terminus, the 23-residue chain is Hemocyanin subunit 1 (23 aa).

Residues 1–23 (DSPGGASDTQKQHXVNSXXXKXY) are disordered.

Belongs to the tyrosinase family. Hemocyanin subfamily. As to expression, hemolymph.

The protein localises to the secreted. Its subcellular location is the extracellular space. In terms of biological role, hemocyanins are copper-containing oxygen carriers occurring freely dissolved in the hemolymph of many mollusks and arthropods. The polypeptide is Hemocyanin subunit 1 (Cancer pagurus (Rock crab)).